Here is a 257-residue protein sequence, read N- to C-terminus: Zinc transporter ZupT (257 aa).

8 helical membrane-spanning segments follow: residues 5-25 (LILTILAGAATFIGAFLGVLG), 32-52 (LLAFSLGFAAGIMLLISLMEM), 61-81 (GMSPVLGYGMFIFGLLGYFGL), 109-129 (AILLTLGISLHNFPEGIATFV), 137-157 (LGFGIALAVALHNIPEGLAVA), 171-191 (ILWAGISGLAEILGGVLAWLI), 195-215 (MISPVVMAAIMAAVAGIMVAL), and 236-256 (GVLCGMSVMGFSLVLLQTAGI). Residues N120 and E123 each contribute to the Fe(2+) site. E123 and H148 together coordinate Zn(2+). Residues N149, E152, and E181 each coordinate Fe(2+). E152 lines the Zn(2+) pocket.

Belongs to the ZIP transporter (TC 2.A.5) family. ZupT subfamily.

It localises to the cell inner membrane. It carries out the reaction Zn(2+)(in) = Zn(2+)(out). Its function is as follows. Mediates zinc uptake. May also transport other divalent cations. This chain is Zinc transporter ZupT, found in Shigella flexneri serotype 5b (strain 8401).